We begin with the raw amino-acid sequence, 217 residues long: Translation initiation factor 6 (217 aa).

Belongs to the eIF-6 family.

In terms of biological role, binds to the 50S ribosomal subunit and prevents its association with the 30S ribosomal subunit to form the 70S initiation complex. This chain is Translation initiation factor 6, found in Methanococcoides burtonii (strain DSM 6242 / NBRC 107633 / OCM 468 / ACE-M).